The following is a 602-amino-acid chain: Glutamyl-tRNA(Gln) amidotransferase subunit B, mitochondrial (602 aa).

The N-terminal 52 residues, 1–52, are a transit peptide targeting the mitochondrion; that stretch reads MLQQWLRQSPAAAGLLRCSRYRGPQAALLQLSPQRAPTYHAIRSLQTSAAES. The tract at residues 61 to 83 is disordered; the sequence is QLKQGAKGLKAQKRQRRESEEAS.

The protein belongs to the GatB/GatE family. GatB subfamily. As to quaternary structure, subunit of the heterotrimeric GatCAB amidotransferase (AdT) complex, composed of A, B and C subunits.

Its subcellular location is the mitochondrion. It catalyses the reaction L-glutamyl-tRNA(Gln) + L-glutamine + ATP + H2O = L-glutaminyl-tRNA(Gln) + L-glutamate + ADP + phosphate + H(+). Allows the formation of correctly charged Gln-tRNA(Gln) through the transamidation of misacylated Glu-tRNA(Gln) in the mitochondria. The reaction takes place in the presence of glutamine and ATP through an activated gamma-phospho-Glu-tRNA(Gln). The sequence is that of Glutamyl-tRNA(Gln) amidotransferase subunit B, mitochondrial from Aspergillus clavatus (strain ATCC 1007 / CBS 513.65 / DSM 816 / NCTC 3887 / NRRL 1 / QM 1276 / 107).